Reading from the N-terminus, the 122-residue chain is Holo-[acyl-carrier-protein] synthase (122 aa).

Residues aspartate 8 and glutamate 52 each coordinate Mg(2+).

It belongs to the P-Pant transferase superfamily. AcpS family. Requires Mg(2+) as cofactor.

The protein localises to the cytoplasm. It catalyses the reaction apo-[ACP] + CoA = holo-[ACP] + adenosine 3',5'-bisphosphate + H(+). Functionally, transfers the 4'-phosphopantetheine moiety from coenzyme A to a Ser of acyl-carrier-protein. The protein is Holo-[acyl-carrier-protein] synthase of Lachnoclostridium phytofermentans (strain ATCC 700394 / DSM 18823 / ISDg) (Clostridium phytofermentans).